A 53-amino-acid polypeptide reads, in one-letter code: uncharacterized protein (53 aa).

Residues 26–46 (CYLLFCFLECFLNLFKKCGVF) traverse the membrane as a helical segment.

Belongs to the plectrovirus ORF11 family.

It is found in the host membrane. This is an uncharacterized protein from Spiroplasma virus SpV1-R8A2 B (SpV1).